The chain runs to 252 residues: Imidazole glycerol phosphate synthase subunit HisF (252 aa).

Catalysis depends on residues Asp-11 and Asp-130.

It belongs to the HisA/HisF family. In terms of assembly, heterodimer of HisH and HisF.

The protein resides in the cytoplasm. It catalyses the reaction 5-[(5-phospho-1-deoxy-D-ribulos-1-ylimino)methylamino]-1-(5-phospho-beta-D-ribosyl)imidazole-4-carboxamide + L-glutamine = D-erythro-1-(imidazol-4-yl)glycerol 3-phosphate + 5-amino-1-(5-phospho-beta-D-ribosyl)imidazole-4-carboxamide + L-glutamate + H(+). It participates in amino-acid biosynthesis; L-histidine biosynthesis; L-histidine from 5-phospho-alpha-D-ribose 1-diphosphate: step 5/9. Its function is as follows. IGPS catalyzes the conversion of PRFAR and glutamine to IGP, AICAR and glutamate. The HisF subunit catalyzes the cyclization activity that produces IGP and AICAR from PRFAR using the ammonia provided by the HisH subunit. The sequence is that of Imidazole glycerol phosphate synthase subunit HisF from Desulforamulus reducens (strain ATCC BAA-1160 / DSM 100696 / MI-1) (Desulfotomaculum reducens).